The following is a 78-amino-acid chain: MISKDDIRAILAEGTDLGPPEQFPDDADVVMDSFTLIVLQHGLEERHGVVIDPHFEDMEQFTSIDGIHAYLTALPAER.

Ser33 is subject to O-(pantetheine 4'-phosphoryl)serine.

It belongs to the acyl carrier protein (ACP) family. Post-translationally, 4'-phosphopantetheine is transferred from CoA to a specific serine of the apo-form of this carrier protein.

Its pathway is antibiotic biosynthesis. Functionally, involved in the biosynthesis of actinomycin. Acts as a carrier in the transfer and thioesterification of 4-methyl-3-hydroxyanthranilic acid (4-MHA). This chain is 4-methyl-3-hydroxyanthranilic acid carrier protein, found in Streptomyces anulatus (Streptomyces chrysomallus).